The sequence spans 186 residues: ADP-ribosylation factor-like protein 8A (186 aa).

The note=Mediates targeting to membranes intramembrane region spans 1 to 19 (MIALFNKLLDWFKALFWKE). Residues 29-35 (QYSGKTT), 71-75 (DIGGQ), and 130-133 (NKRD) contribute to the GTP site.

The protein belongs to the small GTPase superfamily. Arf family. Interacts with PLEKHM1. When GTP-bound, interacts with RUFY3 and RUFY4, but not with RUFY1, nor RUFY2.

It is found in the late endosome membrane. The protein localises to the lysosome membrane. Its subcellular location is the cytoplasm. It localises to the cytoskeleton. The protein resides in the spindle. It is found in the cell projection. The protein localises to the axon. Its subcellular location is the synapse. Its function is as follows. Plays a role in lysosomes motility. In neurons, mediates the anterograde axonal long-range transport of presynaptic lysosome-related vesicles required for presynaptic biogenesis and synaptic function. May play a role in chromosome segregation. The chain is ADP-ribosylation factor-like protein 8A (Arl8a) from Mus musculus (Mouse).